The primary structure comprises 349 residues: Glycerol-3-phosphate dehydrogenase [NAD(P)+] (349 aa).

NADPH is bound by residues W16, R36, and K110. K110, G138, and T140 together coordinate sn-glycerol 3-phosphate. A142 is an NADPH binding site. Sn-glycerol 3-phosphate-binding residues include K193, D246, S256, R257, and N258. The active-site Proton acceptor is the K193. R257 contributes to the NADPH binding site. NADPH contacts are provided by V281 and E283.

This sequence belongs to the NAD-dependent glycerol-3-phosphate dehydrogenase family.

The protein localises to the cytoplasm. The enzyme catalyses sn-glycerol 3-phosphate + NAD(+) = dihydroxyacetone phosphate + NADH + H(+). It catalyses the reaction sn-glycerol 3-phosphate + NADP(+) = dihydroxyacetone phosphate + NADPH + H(+). Its pathway is membrane lipid metabolism; glycerophospholipid metabolism. Functionally, catalyzes the reduction of the glycolytic intermediate dihydroxyacetone phosphate (DHAP) to sn-glycerol 3-phosphate (G3P), the key precursor for phospholipid synthesis. In Rhodospirillum rubrum (strain ATCC 11170 / ATH 1.1.1 / DSM 467 / LMG 4362 / NCIMB 8255 / S1), this protein is Glycerol-3-phosphate dehydrogenase [NAD(P)+].